The sequence spans 174 residues: MASAVLGLTLRWVMFLSAVLLLLLPGASAQEPPGVGCSEYTNRSCEECLRNVSCLWCNENKACLDYPVRKILPPASLCKLSSARWGVCWVNFEALIITMSVLGGSVLLGITVCCCCCCRRKRSRKPDKSDERAMREQEERRVRQEERRAEMKSRHDEIRKKYGLFKEQNPYEKF.

The N-terminal stretch at Met1–Ala29 is a signal peptide. Over Gln30 to Glu93 the chain is Extracellular. In terms of domain architecture, PSI spans Gly36–Trp89. N-linked (GlcNAc...) asparagine glycans are attached at residues Asn42 and Asn51. The helical transmembrane segment at Ala94–Cys114 threads the bilayer. Topologically, residues Cys115 to Phe174 are cytoplasmic. Residues Pro126–His155 are disordered. Positions Asp127 to Gly163 form a coiled coil. Phosphotyrosine is present on Tyr171.

In terms of assembly, interacts with PTTG1.

The protein resides in the cell membrane. It is found in the cytoplasm. Its subcellular location is the nucleus. In terms of biological role, may facilitate PTTG1 nuclear translocation. This chain is Pituitary tumor-transforming gene 1 protein-interacting protein (Pttg1ip), found in Rattus norvegicus (Rat).